Consider the following 189-residue polypeptide: GTP cyclohydrolase 1 (189 aa).

Zn(2+) contacts are provided by cysteine 76, histidine 79, and cysteine 149.

The protein belongs to the GTP cyclohydrolase I family. Toroid-shaped homodecamer, composed of two pentamers of five dimers.

The enzyme catalyses GTP + H2O = 7,8-dihydroneopterin 3'-triphosphate + formate + H(+). It participates in cofactor biosynthesis; 7,8-dihydroneopterin triphosphate biosynthesis; 7,8-dihydroneopterin triphosphate from GTP: step 1/1. This is GTP cyclohydrolase 1 from Dehalococcoides mccartyi (strain ATCC BAA-2266 / KCTC 15142 / 195) (Dehalococcoides ethenogenes (strain 195)).